Consider the following 312-residue polypeptide: MAEFEDQLVFNSISARALKAYFTAKINEMVDELVTRKCPQKKKSQAKKPEVRIPVDLVKSSFVKKFGLCNYGGILISLINSLVENNFFTKDGKLDDTGKKELVLTDVEKRILNTIDKSSPLYIDISDVKVLAARLKRSATQFNFNGHTYHLENDKIEDLINQLVKDESIQLDEKSSIKDSMYVIPDELIDVLKTRLFRSPQVKDNIISRTRLYDYFTRVTKRDESSIYVILKDPRIASILSLETVKMGAFMYTKHSMLTNAISSRVDRYSKKFQESFYEDIAEFVKENERVNVSRVVECLTVPNITISSNAE.

The protein belongs to the orthopoxvirus OPG077 family.

It is found in the virion. Its function is as follows. DNA-binding protein which binds to the hairpin form of the viral telomeric sequence. Required for the production of mature virions (MV). This Rabbitpox virus (strain Utrecht) (RPV) protein is Telomere-binding protein OPG077 (OPG077).